The primary structure comprises 109 residues: Large ribosomal subunit protein uL22 (109 aa).

The protein belongs to the universal ribosomal protein uL22 family. In terms of assembly, part of the 50S ribosomal subunit.

Functionally, this protein binds specifically to 23S rRNA; its binding is stimulated by other ribosomal proteins, e.g. L4, L17, and L20. It is important during the early stages of 50S assembly. It makes multiple contacts with different domains of the 23S rRNA in the assembled 50S subunit and ribosome. Its function is as follows. The globular domain of the protein is located near the polypeptide exit tunnel on the outside of the subunit, while an extended beta-hairpin is found that lines the wall of the exit tunnel in the center of the 70S ribosome. The protein is Large ribosomal subunit protein uL22 of Azoarcus sp. (strain BH72).